The following is a 347-amino-acid chain: S-adenosylmethionine decarboxylase proenzyme (347 aa).

Active-site residues include Glu-10 and Glu-13. Ser-66 functions as the Schiff-base intermediate with substrate; via pyruvic acid in the catalytic mechanism. Ser-66 is subject to Pyruvic acid (Ser); by autocatalysis. The active-site Proton donor; for catalytic activity is the Cys-80. Catalysis depends on proton acceptor; for processing activity residues Ser-237 and His-251.

The protein belongs to the eukaryotic AdoMetDC family. It depends on pyruvate as a cofactor. Post-translationally, is synthesized initially as an inactive proenzyme. Formation of the active enzyme involves a self-maturation process in which the active site pyruvoyl group is generated from an internal serine residue via an autocatalytic post-translational modification. Two non-identical subunits are generated from the proenzyme in this reaction, and the pyruvate is formed at the N-terminus of the alpha chain, which is derived from the carboxyl end of the proenzyme. The post-translation cleavage follows an unusual pathway, termed non-hydrolytic serinolysis, in which the side chain hydroxyl group of the serine supplies its oxygen atom to form the C-terminus of the beta chain, while the remainder of the serine residue undergoes an oxidative deamination to produce ammonia and the pyruvoyl group blocking the N-terminus of the alpha chain.

The catalysed reaction is S-adenosyl-L-methionine + H(+) = S-adenosyl 3-(methylsulfanyl)propylamine + CO2. The protein operates within amine and polyamine biosynthesis; S-adenosylmethioninamine biosynthesis; S-adenosylmethioninamine from S-adenosyl-L-methionine: step 1/1. The chain is S-adenosylmethionine decarboxylase proenzyme (SamDC) from Drosophila melanogaster (Fruit fly).